The primary structure comprises 282 residues: TPR repeat protein oca3 (282 aa).

TPR repeat units follow at residues 16 to 50 (IVAL…ALTT), 71 to 104 (PRVE…DPTH), 139 to 172 (LEAW…QPFE), and 174 to 211 (RLFA…CEEY).

The protein resides in the cytoplasm. Its subcellular location is the nucleus. May be involved in cell cycle regulation. This is TPR repeat protein oca3 (oca3) from Schizosaccharomyces pombe (strain 972 / ATCC 24843) (Fission yeast).